The chain runs to 266 residues: Undecaprenyl-diphosphatase (266 aa).

8 helical membrane-spanning segments follow: residues 1-21 (MNIFQTIVLALVQGLSEFLPI), 43-63 (FDVVVHMGTLSAVIFYYQAMI), 83-103 (SKLAWGVLLGTIPVGLVGMIF), 114-134 (VEIIAYATLVFGVLLGFASWF), 144-164 (TISWVDIGFIGMAQTLALIPG), 186-206 (IQFAFLLSIPVISLSLILILI), 219-239 (LLAMGFVVAAISAYVTIVFFI), and 245-265 (VGMMPFVIYRLTLGIFLFFFI).

This sequence belongs to the UppP family.

It is found in the cell inner membrane. It carries out the reaction di-trans,octa-cis-undecaprenyl diphosphate + H2O = di-trans,octa-cis-undecaprenyl phosphate + phosphate + H(+). Its function is as follows. Catalyzes the dephosphorylation of undecaprenyl diphosphate (UPP). Confers resistance to bacitracin. This Ruthia magnifica subsp. Calyptogena magnifica protein is Undecaprenyl-diphosphatase.